The sequence spans 323 residues: UPF0065 protein BP0148 (323 aa).

The N-terminal stretch at 1-24 (MKPFSLLRRIATIALLMAASSAHA) is a signal peptide.

The protein belongs to the UPF0065 (bug) family.

The protein resides in the periplasm. This Bordetella pertussis (strain Tohama I / ATCC BAA-589 / NCTC 13251) protein is UPF0065 protein BP0148.